The sequence spans 834 residues: Unextended protein (834 aa).

An N-terminal signal peptide occupies residues 1–20 (MNTYFISFITIIIFANGING). Topologically, residues 21–182 (TSVDTSNKLL…DFLKIKTFEP (162 aa)) are extracellular. Residues N38, N42, and N156 are each glycosylated (N-linked (GlcNAc...) asparagine). One can recognise a CNNM transmembrane domain in the interval 182 to 361 (PLIPVWLAII…NDVNDLDKNE (180 aa)). Residues 183 to 203 (LIPVWLAIIIIVTCLGFSALF) traverse the membrane as a helical segment. Topologically, residues 204 to 244 (SGLNLGLMSMDRTELKILRNTGTEKEKKYASKIAPVRDQGN) are cytoplasmic. The helical transmembrane segment at 245 to 265 (YLLCSILLGNVLVNSTFTILL) threads the bilayer. Over 266 to 267 (DG) the chain is Extracellular. A helical transmembrane segment spans residues 268 to 288 (LTSGLFAVIFSTLAIVLFGEI). Topologically, residues 289-298 (TPQAVCSRHG) are cytoplasmic. The chain crosses the membrane as a helical span at residues 299 to 319 (LAIGAKTILVTKTVMAITAPL). Residues 320–834 (SYPVSRILDK…DKFESKQSKP (515 aa)) lie on the Extracellular side of the membrane. CBS domains follow at residues 380–441 (MTHI…NTPL) and 448–515 (YQNP…IVDE). An N-linked (GlcNAc...) asparagine glycan is attached at N522. 604-656 (YIFTQGKAVDFFVLILEGRVEVTIGKEALMFESGPFTYFGTQALVPNVVIDSP) lines the a nucleoside 3',5'-cyclic phosphate pocket. The interval 739 to 765 (CFAQNQSTRRLSNRSINSSPTNMNRSP) is disordered. The span at 740 to 763 (FAQNQSTRRLSNRSINSSPTNMNR) shows a compositional bias: polar residues. N-linked (GlcNAc...) asparagine glycans are attached at residues N743, N751, and N790. Residues 807-834 (SGEQDTTAASMPLLPKLDDKFESKQSKP) are disordered. Residues 822-834 (KLDDKFESKQSKP) are compositionally biased toward basic and acidic residues.

It belongs to the ACDP family. Interacts with PRL-1, possibly at the plasma membrane.

It localises to the cell membrane. Probable metal transporter. Acts downstream of PRL-1 and protects the nervous system against olfactory carbon dioxide stimulation. In Drosophila melanogaster (Fruit fly), this protein is Unextended protein.